A 367-amino-acid polypeptide reads, in one-letter code: Inner membrane amino-acid ABC transporter permease protein YhdY (367 aa).

The Cytoplasmic portion of the chain corresponds to 1–36; it reads MTKVLLSHPPRPASHNSSRAMVWVRKNLFSSWSNSL. The chain crosses the membrane as a helical span at residues 37–57; the sequence is LTIGCIWLMWELIPPLLNWAF. Residues 58–99 are Periplasmic-facing; the sequence is LQANWVGSTRADCTKAGACWVFIHERFGQFMYGLYPHDQRWR. Residues 100–120 traverse the membrane as a helical segment; sequence INLALLIGLVSIAPMFWKILP. Residues 121–125 lie on the Cytoplasmic side of the membrane; it reads HRGRY. Residues 126–146 form a helical membrane-spanning segment; it reads IAAWAVIYPLIVWWLMYGGFF. At 147 to 162 the chain is on the periplasmic side; the sequence is ALERVETRQWGGLTLT. Positions 159-353 constitute an ABC transmembrane type-1 domain; the sequence is LTLTLIIASV…IFCFSMSRYS (195 aa). The chain crosses the membrane as a helical span at residues 163 to 183; it reads LIIASVGIAGALPWGILLALG. At 184–192 the chain is on the cytoplasmic side; sequence RRSHMPIVR. Residues 193-213 traverse the membrane as a helical segment; that stretch reads ILSVIFIEFWRGVPLITVLFM. The Periplasmic portion of the chain corresponds to 214–233; the sequence is SSVMLPLFMAEGTSIDKLIR. A helical membrane pass occupies residues 234-254; it reads ALVGVILFQSAYVAEVVRGGL. At 255–291 the chain is on the cytoplasmic side; it reads QALPKGQYEAAESLALGYWKTQGLVILPQALKLVIPG. Residues 292 to 312 traverse the membrane as a helical segment; it reads LVNTIIALFKDTSLVIIIGLF. The Periplasmic segment spans residues 313-326; sequence DLFSSVQQATVDPA. The helical transmembrane segment at 327–347 threads the bilayer; that stretch reads WLGMSTEGYVFAALIYWIFCF. Topologically, residues 348–367 are cytoplasmic; that stretch reads SMSRYSQYLEKRFNTGRTPH.

This sequence belongs to the binding-protein-dependent transport system permease family. HisMQ subfamily.

The protein resides in the cell inner membrane. Functionally, probably part of the binding-protein-dependent transport system YdhWXYZ for an amino acid; probably responsible for the translocation of the substrate across the membrane. This Escherichia coli (strain K12) protein is Inner membrane amino-acid ABC transporter permease protein YhdY (yhdY).